The primary structure comprises 332 residues: Ribose-phosphate pyrophosphokinase (332 aa).

55 to 57 (DGE) provides a ligand contact to ATP. Positions 148 and 187 each coordinate Mg(2+). Lys-211 is an active-site residue. D-ribose 5-phosphate contacts are provided by residues Arg-213, Asp-237, and 241 to 245 (DTGGT).

The protein belongs to the ribose-phosphate pyrophosphokinase family. Class I subfamily. In terms of assembly, homohexamer. Requires Mg(2+) as cofactor.

It localises to the cytoplasm. It catalyses the reaction D-ribose 5-phosphate + ATP = 5-phospho-alpha-D-ribose 1-diphosphate + AMP + H(+). It participates in metabolic intermediate biosynthesis; 5-phospho-alpha-D-ribose 1-diphosphate biosynthesis; 5-phospho-alpha-D-ribose 1-diphosphate from D-ribose 5-phosphate (route I): step 1/1. In terms of biological role, involved in the biosynthesis of the central metabolite phospho-alpha-D-ribosyl-1-pyrophosphate (PRPP) via the transfer of pyrophosphoryl group from ATP to 1-hydroxyl of ribose-5-phosphate (Rib-5-P). The polypeptide is Ribose-phosphate pyrophosphokinase (Prochlorococcus marinus (strain MIT 9313)).